Consider the following 179-residue polypeptide: ATP synthase subunit delta 1 (179 aa).

Belongs to the ATPase delta chain family. F-type ATPases have 2 components, F(1) - the catalytic core - and F(0) - the membrane proton channel. F(1) has five subunits: alpha(3), beta(3), gamma(1), delta(1), epsilon(1). F(0) has three main subunits: a(1), b(2) and c(10-14). The alpha and beta chains form an alternating ring which encloses part of the gamma chain. F(1) is attached to F(0) by a central stalk formed by the gamma and epsilon chains, while a peripheral stalk is formed by the delta and b chains.

The protein resides in the cell inner membrane. Functionally, f(1)F(0) ATP synthase produces ATP from ADP in the presence of a proton or sodium gradient. F-type ATPases consist of two structural domains, F(1) containing the extramembraneous catalytic core and F(0) containing the membrane proton channel, linked together by a central stalk and a peripheral stalk. During catalysis, ATP synthesis in the catalytic domain of F(1) is coupled via a rotary mechanism of the central stalk subunits to proton translocation. This protein is part of the stalk that links CF(0) to CF(1). It either transmits conformational changes from CF(0) to CF(1) or is implicated in proton conduction. The sequence is that of ATP synthase subunit delta 1 from Syntrophotalea carbinolica (strain DSM 2380 / NBRC 103641 / GraBd1) (Pelobacter carbinolicus).